Reading from the N-terminus, the 533-residue chain is Protein trichome birefringence-like 18 (533 aa).

Residues 21–41 (VSTVAIAIGGLASFFVFGLLL) form a helical; Signal-anchor for type II membrane protein membrane-spanning segment. The disordered stretch occupies residues 93-171 (SDSSSGLPVV…PDDVSETASA (79 aa)). Residues 113-154 (SSDRKLETPLTQEKEDLVSSDITEKTDVQSGERETNVSKAED) are compositionally biased toward basic and acidic residues. Positions 248-250 (GDS) match the GDS motif motif. The interval 475–502 (HDGHPGPFRSPDPNKITKRGPDGRPPPQ) is disordered. The short motif at 503–517 (DCLHWCMPGPVDTWN) is the DCXHWCLPGXXDXWN motif element.

This sequence belongs to the PC-esterase family. TBL subfamily.

It localises to the membrane. In terms of biological role, may act as a bridging protein that binds pectin and other cell wall polysaccharides. Probably involved in maintaining esterification of pectins. May be involved in the specific O-acetylation of cell wall polymers. The sequence is that of Protein trichome birefringence-like 18 (TBL18) from Arabidopsis thaliana (Mouse-ear cress).